A 92-amino-acid polypeptide reads, in one-letter code: Promotilin (92 aa).

The interval 12–49 (RMQEKERNRGQKKSLGLQQRSEEVGSLDPTEAAEEEGK) is disordered.

It belongs to the motilin family.

Its subcellular location is the secreted. Functionally, plays an important role in the regulation of interdigestive gastrointestinal motility and indirectly causes rhythmic contraction of duodenal and colonic smooth muscle. The chain is Promotilin (MLN) from Equus caballus (Horse).